The sequence spans 165 residues: Transmembrane protein 128 (165 aa).

A run of 4 helical transmembrane segments spans residues 49-69 (NIHS…VDFF), 81-101 (WFLC…YCIV), 119-139 (LIPI…IALW), and 144-164 (FFTP…ITLL).

It localises to the membrane. The sequence is that of Transmembrane protein 128 (TMEM128) from Homo sapiens (Human).